Consider the following 995-residue polypeptide: S1 RNA-binding domain-containing protein 1 (995 aa).

The segment at 23-81 (SFSELSSASEEDDKEDSAWEPQKKVPRSRKQPPPKESKPKRMPRVKKNAPQISDGSEVV) is disordered. Residues K84 and K134 each participate in a glycyl lysine isopeptide (Lys-Gly) (interchain with G-Cter in SUMO2) cross-link. The segment at 120–165 (CAAQPHTVRRTKKLKVEEETSKASNLEGESNSSETPSTSTVWGGTC) is disordered. A compositionally biased stretch (low complexity) spans 146–159 (EGESNSSETPSTST). Residues K166, K167, and K183 each participate in a glycyl lysine isopeptide (Lys-Gly) (interchain with G-Cter in SUMO2) cross-link. K185 participates in a covalent cross-link: Glycyl lysine isopeptide (Lys-Gly) (interchain with G-Cter in SUMO1); alternate. K185 is covalently cross-linked (Glycyl lysine isopeptide (Lys-Gly) (interchain with G-Cter in SUMO2); alternate). A coiled-coil region spans residues 258 to 288 (ADSLREVQQTLEELRAVAKKVHSTIQKIKKE). S861 carries the phosphoserine modification. An S1 motif domain is found at 919–992 (GTVLTGKVEN…PRSRITLDLI (74 aa)). Residue K955 forms a Glycyl lysine isopeptide (Lys-Gly) (interchain with G-Cter in SUMO2) linkage. Position 964 is a phosphoserine (S964).

The protein is S1 RNA-binding domain-containing protein 1 (SRBD1) of Homo sapiens (Human).